The following is a 364-amino-acid chain: Ribosomal RNA large subunit methyltransferase M (364 aa).

S-adenosyl-L-methionine is bound by residues Ser-198, 231–234 (APGG), Asp-250, Asp-270, and Asp-286. Lys-315 functions as the Proton acceptor in the catalytic mechanism.

It belongs to the class I-like SAM-binding methyltransferase superfamily. RNA methyltransferase RlmE family. RlmM subfamily. In terms of assembly, monomer.

The protein resides in the cytoplasm. The catalysed reaction is cytidine(2498) in 23S rRNA + S-adenosyl-L-methionine = 2'-O-methylcytidine(2498) in 23S rRNA + S-adenosyl-L-homocysteine + H(+). Catalyzes the 2'-O-methylation at nucleotide C2498 in 23S rRNA. The protein is Ribosomal RNA large subunit methyltransferase M of Thauera aminoaromatica.